A 255-amino-acid polypeptide reads, in one-letter code: Electron transfer flavoprotein subunit beta (255 aa).

Ala-2 carries the N-acetylalanine modification. Residues Ala-9, Asn-39–Cys-42, Cys-66, and Gly-123–Thr-134 contribute to the AMP site. Positions Ala-183–Lys-205 are recognition loop. At Lys-200 the chain carries N6,N6,N6-trimethyllysine; by ETFBKMT; alternate. Lys-200 is subject to N6-acetyllysine; alternate. Lys-200 is subject to N6-methyllysine; alternate. N6,N6,N6-trimethyllysine; by ETFBKMT is present on Lys-203. Lys-210 carries the post-translational modification N6-acetyllysine; alternate. Lys-210 carries the post-translational modification N6-succinyllysine; alternate. Phosphoserine is present on residues Ser-223 and Ser-226. N6-acetyllysine is present on Lys-238. Lys-248 carries the post-translational modification N6-acetyllysine; alternate. Lys-248 carries the post-translational modification N6-succinyllysine; alternate.

The protein belongs to the ETF beta-subunit/FixA family. Heterodimer composed of ETFA and ETFB. Identified in a complex that contains ETFA, ETFB and ETFRF1. Interacts with ACADM. In terms of processing, methylated. Trimethylation at Lys-200 and Lys-203 may negatively regulate the activity in electron transfer from acyl-CoA dehydrogenases.

It localises to the mitochondrion matrix. In terms of biological role, heterodimeric electron transfer flavoprotein that accepts electrons from several mitochondrial dehydrogenases, including acyl-CoA dehydrogenases, glutaryl-CoA and sarcosine dehydrogenase. It transfers the electrons to the main mitochondrial respiratory chain via ETF-ubiquinone oxidoreductase. Required for normal mitochondrial fatty acid oxidation and normal amino acid metabolism. ETFB binds an AMP molecule that probably has a purely structural role. In Mus musculus (Mouse), this protein is Electron transfer flavoprotein subunit beta.